The chain runs to 300 residues: ETS homologous factor (300 aa).

Residues 29-115 (STCNVSSGFF…SNLQHLKWNG (87 aa)) form the PNT domain. Residues 183–202 (ESPDMKKEQDPPAKCHTKKH) form a disordered region. Residues 185 to 195 (PDMKKEQDPPA) show a composition bias toward basic and acidic residues. The ETS DNA-binding region spans 207–289 (THLWEFIRDI…DGRRLVYKFG (83 aa)).

It belongs to the ETS family.

The protein resides in the nucleus. Transcriptional activator that may play a role in regulating epithelial cell differentiation and proliferation. May act as a repressor for a specific subset of ETS/AP-1-responsive genes, and as a modulator of the nuclear response to mitogen-activated protein kinase signaling cascades. Binds to DNA sequences containing the consensus nucleotide core sequence GGAA. Involved in regulation of TNFRSF10B/DR5 expression through Ets-binding sequences on the TNFRSF10B/DR5 promoter. The sequence is that of ETS homologous factor (EHF) from Pan paniscus (Pygmy chimpanzee).